The primary structure comprises 126 residues: Fluoride-specific ion channel FluC (126 aa).

Helical transmembrane passes span Phe6 to Leu26, Tyr36 to Phe56, Leu68 to Val88, and Ile99 to Leu119. Na(+)-binding residues include Gly76 and Thr79.

Belongs to the fluoride channel Fluc/FEX (TC 1.A.43) family.

The protein localises to the cell inner membrane. It carries out the reaction fluoride(in) = fluoride(out). With respect to regulation, na(+) is not transported, but it plays an essential structural role and its presence is essential for fluoride channel function. Fluoride-specific ion channel. Important for reducing fluoride concentration in the cell, thus reducing its toxicity. In Ralstonia nicotianae (strain ATCC BAA-1114 / GMI1000) (Ralstonia solanacearum), this protein is Fluoride-specific ion channel FluC.